Consider the following 353-residue polypeptide: Photosystem II protein D1 (353 aa).

Thr2 is modified (N-acetylthreonine). Thr2 bears the Phosphothreonine mark. Transmembrane regions (helical) follow at residues 29 to 46 (YIGW…TATS), 118 to 133 (HFLL…EWEL), and 142 to 156 (WIAV…AATA). His118 contributes to the chlorophyll a binding site. Residue Tyr126 coordinates pheophytin a. Residues Asp170 and Glu189 each contribute to the [CaMn4O5] cluster site. A helical membrane pass occupies residues 197 to 218 (FHMLGVAGVFGGSLFSAMHGSL). His198 lines the chlorophyll a pocket. Residues His215 and 264-265 (SF) each bind a quinone. His215 is a binding site for Fe cation. Fe cation is bound at residue His272. The helical transmembrane segment at 274–288 (FLAAWPVIGIWFTAL) threads the bilayer. Positions 332, 333, 342, and 344 each coordinate [CaMn4O5] cluster. The propeptide occupies 345–353 (AVEAPSTNG).

It belongs to the reaction center PufL/M/PsbA/D family. As to quaternary structure, PSII is composed of 1 copy each of membrane proteins PsbA, PsbB, PsbC, PsbD, PsbE, PsbF, PsbH, PsbI, PsbJ, PsbK, PsbL, PsbM, PsbT, PsbX, PsbY, PsbZ, Psb30/Ycf12, at least 3 peripheral proteins of the oxygen-evolving complex and a large number of cofactors. It forms dimeric complexes. The D1/D2 heterodimer binds P680, chlorophylls that are the primary electron donor of PSII, and subsequent electron acceptors. It shares a non-heme iron and each subunit binds pheophytin, quinone, additional chlorophylls, carotenoids and lipids. D1 provides most of the ligands for the Mn4-Ca-O5 cluster of the oxygen-evolving complex (OEC). There is also a Cl(-1) ion associated with D1 and D2, which is required for oxygen evolution. The PSII complex binds additional chlorophylls, carotenoids and specific lipids. is required as a cofactor. Post-translationally, tyr-161 forms a radical intermediate that is referred to as redox-active TyrZ, YZ or Y-Z. C-terminally processed by CTPA; processing is essential to allow assembly of the oxygen-evolving complex and thus photosynthetic growth.

The protein resides in the plastid. Its subcellular location is the chloroplast thylakoid membrane. The catalysed reaction is 2 a plastoquinone + 4 hnu + 2 H2O = 2 a plastoquinol + O2. Functionally, photosystem II (PSII) is a light-driven water:plastoquinone oxidoreductase that uses light energy to abstract electrons from H(2)O, generating O(2) and a proton gradient subsequently used for ATP formation. It consists of a core antenna complex that captures photons, and an electron transfer chain that converts photonic excitation into a charge separation. The D1/D2 (PsbA/PsbD) reaction center heterodimer binds P680, the primary electron donor of PSII as well as several subsequent electron acceptors. The chain is Photosystem II protein D1 from Buxus microphylla (Littleleaf boxwood).